The chain runs to 395 residues: Choline/ethanolamine kinase (395 aa).

At Ala-2 the chain carries N-acetylalanine. ATP-binding positions include 75–81 (SGGLSNL), Arg-104, 146–152 (QYIPSRP), Gln-244, and Asp-264. Phosphocholine is bound at residue 77-79 (GLS).

The protein belongs to the choline/ethanolamine kinase family. As to quaternary structure, homodimer, and heterodimer with CHKA.

The enzyme catalyses choline + ATP = phosphocholine + ADP + H(+). It carries out the reaction ethanolamine + ATP = phosphoethanolamine + ADP + H(+). It functions in the pathway phospholipid metabolism; phosphatidylethanolamine biosynthesis; phosphatidylethanolamine from ethanolamine: step 1/3. In terms of biological role, has a key role in phospholipid metabolism, and catalyzes the first step of phosphatidylethanolamine and phosphatidylcholine biosynthesis. In Homo sapiens (Human), this protein is Choline/ethanolamine kinase (CHKB).